Reading from the N-terminus, the 141-residue chain is ATP synthase epsilon chain (141 aa).

This sequence belongs to the ATPase epsilon chain family. F-type ATPases have 2 components, CF(1) - the catalytic core - and CF(0) - the membrane proton channel. CF(1) has five subunits: alpha(3), beta(3), gamma(1), delta(1), epsilon(1). CF(0) has three main subunits: a, b and c.

The protein resides in the cell inner membrane. In terms of biological role, produces ATP from ADP in the presence of a proton gradient across the membrane. This is ATP synthase epsilon chain from Burkholderia mallei (strain NCTC 10247).